The primary structure comprises 309 residues: N(5)-(carboxyethyl)ornithine synthase (309 aa).

Residues Arg15, Lys71, and His92 each coordinate pyruvate. Residue 171–176 (GSGNVA) coordinates NADP(+).

The protein belongs to the AlaDH/PNT family. CEOS subfamily. In terms of assembly, homotetramer.

The enzyme catalyses N(5)-[1(S)-1-carboxyethyl]-L-ornithine + NADP(+) + H2O = L-ornithine + pyruvate + NADPH + H(+). Functionally, catalyzes the NADPH-dependent reductive condensation between pyruvic acid and the side chain amino group of L-ornithine to form N(5)-(L-1-carboxyethyl)-L-ornithine. To a lesser extent, can also use L-lysine as substrate (yielding N(6)-(L-1-carboxyethyl)-L-lysine). This Lactococcus lactis subsp. lactis (strain IL1403) (Streptococcus lactis) protein is N(5)-(carboxyethyl)ornithine synthase (ceo).